Reading from the N-terminus, the 271-residue chain is Large ribosomal subunit protein uL18 (271 aa).

A compositionally biased stretch (basic and acidic residues) spans 245–264 (IRENPCPPKKERTKPADAKR). The interval 245 to 271 (IRENPCPPKKERTKPADAKRWSPQAHL) is disordered.

Belongs to the universal ribosomal protein uL18 family. In terms of assembly, component of the large ribosomal subunit (LSU).

It is found in the cytoplasm. It localises to the nucleus. Component of the ribosome, a large ribonucleoprotein complex responsible for the synthesis of proteins in the cell. The small ribosomal subunit (SSU) binds messenger RNAs (mRNAs) and translates the encoded message by selecting cognate aminoacyl-transfer RNA (tRNA) molecules. The large subunit (LSU) contains the ribosomal catalytic site termed the peptidyl transferase center (PTC), which catalyzes the formation of peptide bonds, thereby polymerizing the amino acids delivered by tRNAs into a polypeptide chain. The nascent polypeptides leave the ribosome through a tunnel in the LSU and interact with protein factors that function in enzymatic processing, targeting, and the membrane insertion of nascent chains at the exit of the ribosomal tunnel. The protein is Large ribosomal subunit protein uL18 (RPL5) of Dunaliella salina (Green alga).